The following is a 659-amino-acid chain: Interferon-induced GTP-binding protein Mx3 (659 aa).

A Dynamin-type G domain is found at Asp-65 to Pro-338. Residues Gly-75–Ser-82 form a G1 motif region. Gly-75–Ser-82 serves as a coordination point for GTP. Positions Val-100–Arg-102 are G2 motif. The G3 motif stretch occupies residues Asp-176–Gly-179. GTP contacts are provided by residues Asp-176–Ile-180 and Thr-245–Asp-248. The interval Thr-245–Asp-248 is G4 motif. Residues Lys-277–Gly-280 form a G5 motif region. The tract at residues Glu-547 to Thr-568 is disordered. The span at Arg-559–Thr-568 shows a compositional bias: polar residues. The 89-residue stretch at Met-571–Gly-659 folds into the GED domain.

This sequence belongs to the TRAFAC class dynamin-like GTPase superfamily. Dynamin/Fzo/YdjA family.

The protein localises to the cytoplasm. In terms of biological role, does not show activity against influenza virus or VSV; although it only differs from Mx2 by 8 positions. In Rattus norvegicus (Rat), this protein is Interferon-induced GTP-binding protein Mx3 (Mx3).